We begin with the raw amino-acid sequence, 379 residues long: Putative F-box protein At2g33190 (379 aa).

The region spanning 6–53 (NGWSKLYPDLLRSIFESLSCLDFHRAGTVCSNWYAVSRSCPLYPWRIV) is the F-box domain.

This is Putative F-box protein At2g33190 from Arabidopsis thaliana (Mouse-ear cress).